We begin with the raw amino-acid sequence, 414 residues long: Putative competence-damage inducible protein (414 aa).

This sequence belongs to the CinA family.

In Moorella thermoacetica (strain ATCC 39073 / JCM 9320), this protein is Putative competence-damage inducible protein.